Consider the following 305-residue polypeptide: MHYSVLLQESINDLNINPQGIYIDATFGRGGHSKAILNRLTTGRLIAFDKDLDAISYARENFQFSNFEIVHASFASIYDYCLQHSLLGKIDGIIMDLGVSSPQLDNAARGFSFTHNGPLDMRMDVSKGITASQALEELSVDDLSYIFKVYGEERFAKKIALRIKDYIQQNGSIRKTLELAELILATIGKKEKKNPATRCFQALRIYVNNELKDLEALLENILAVIKSGGRIAAISFHSLEDRIVKQKFSALINPKQELNRITKMLPQDSSQIKLKWITKKSKANEDELNQNVRSRSAILRVVEKL.

S-adenosyl-L-methionine-binding positions include 30 to 32, D49, F74, D96, and Q103; that span reads GGH.

The protein belongs to the methyltransferase superfamily. RsmH family.

The protein localises to the cytoplasm. It catalyses the reaction cytidine(1402) in 16S rRNA + S-adenosyl-L-methionine = N(4)-methylcytidine(1402) in 16S rRNA + S-adenosyl-L-homocysteine + H(+). In terms of biological role, specifically methylates the N4 position of cytidine in position 1402 (C1402) of 16S rRNA. This is Ribosomal RNA small subunit methyltransferase H from Francisella tularensis subsp. tularensis (strain FSC 198).